Reading from the N-terminus, the 288-residue chain is Acetyl-coenzyme A carboxylase carboxyl transferase subunit beta (288 aa).

The CoA carboxyltransferase N-terminal domain maps to 34-288 (LFAKCPACKH…HLVAFHGGGQ (255 aa)). Residues cysteine 38, cysteine 41, cysteine 56, and cysteine 59 each contribute to the Zn(2+) site. A C4-type zinc finger spans residues 38–59 (CPACKHMIYKKDLGLAKICPTC).

The protein belongs to the AccD/PCCB family. In terms of assembly, acetyl-CoA carboxylase is a heterohexamer composed of biotin carboxyl carrier protein (AccB), biotin carboxylase (AccC) and two subunits each of ACCase subunit alpha (AccA) and ACCase subunit beta (AccD). The cofactor is Zn(2+).

It is found in the cytoplasm. The enzyme catalyses N(6)-carboxybiotinyl-L-lysyl-[protein] + acetyl-CoA = N(6)-biotinyl-L-lysyl-[protein] + malonyl-CoA. Its pathway is lipid metabolism; malonyl-CoA biosynthesis; malonyl-CoA from acetyl-CoA: step 1/1. Component of the acetyl coenzyme A carboxylase (ACC) complex. Biotin carboxylase (BC) catalyzes the carboxylation of biotin on its carrier protein (BCCP) and then the CO(2) group is transferred by the transcarboxylase to acetyl-CoA to form malonyl-CoA. The sequence is that of Acetyl-coenzyme A carboxylase carboxyl transferase subunit beta from Streptococcus pyogenes serotype M4 (strain MGAS10750).